We begin with the raw amino-acid sequence, 253 residues long: Uridylate kinase (253 aa).

9–12 (KLSG) lines the ATP pocket. Gly-51 contributes to the UMP binding site. Gly-52 and Arg-56 together coordinate ATP. Residues Asp-72 and 133–140 (SGNPFFTT) each bind UMP. ATP is bound by residues Thr-160, Tyr-166, and Asp-169.

It belongs to the UMP kinase family. In terms of assembly, homohexamer.

The protein resides in the cytoplasm. The catalysed reaction is UMP + ATP = UDP + ADP. It participates in pyrimidine metabolism; CTP biosynthesis via de novo pathway; UDP from UMP (UMPK route): step 1/1. Its activity is regulated as follows. Inhibited by UTP. Functionally, catalyzes the reversible phosphorylation of UMP to UDP. The chain is Uridylate kinase from Synechococcus sp. (strain JA-2-3B'a(2-13)) (Cyanobacteria bacterium Yellowstone B-Prime).